The chain runs to 334 residues: MASALCRTASRLRSVQLFRRIRVSSDLLSASSPSPACISDALRHGDFSLPRSFFSLNCGIEMLKMDQRCLLSTSASDTTSKHDSGKPETKSSEKNEKSGGSESSDGGSDHKNERASGKDVRGGPVSWMSFFLLFATGAGLVYYYDTQKKRHIEDINKNSIAVKEGPSAGKAAIGGPFSLIRDDGKRVTEKNLMGKWTILYFGFTHCPDICPDELIKLAAAIDKIKENSGVDVVPVFISVDPERDTVQQVHEYVKEFHPKLIGLTGSPEEIKSVARSYRVYYMKTEEEDSDYLVDHSIVMYLMSPEMNFVKFYGKNHDVDSLTDGVVKEIRQYRK.

A mitochondrion-targeting transit peptide spans 1–13; sequence MASALCRTASRLR. The tract at residues 74–120 is disordered; it reads SASDTTSKHDSGKPETKSSEKNEKSGGSESSDGGSDHKNERASGKDV. Composition is skewed to basic and acidic residues over residues 79–99 and 107–120; these read TSKH…EKSG and GSDH…GKDV. Residues 125–144 traverse the membrane as a helical segment; sequence VSWMSFFLLFATGAGLVYYY. One can recognise a Thioredoxin domain in the interval 166-331; it reads PSAGKAAIGG…TDGVVKEIRQ (166 aa). Cu cation contacts are provided by cysteine 206, cysteine 210, and histidine 295.

It belongs to the SCO1/2 family. Expressed in the whole plant with highest expression in imbibed seeds, embryos, endosperm, and root tips.

The protein resides in the mitochondrion inner membrane. Thought to play a role in cellular copper homeostasis, mitochondrial redox signaling or insertion of copper into the active site of COX. Plays an essential role in embryo development. This chain is Protein SCO1 homolog 1, mitochondrial (HCC1), found in Arabidopsis thaliana (Mouse-ear cress).